The following is a 747-amino-acid chain: AMP deaminase 1 (747 aa).

Threonine 81 is subject to Phosphothreonine. Serine 85 carries the phosphoserine modification. Tyrosine 216 carries the phosphotyrosine modification. 2 residues coordinate Zn(2+): histidine 303 and histidine 305. Substrate-binding positions include histidine 305 and 374–379 (KFNDKY). Position 441 is a phosphoserine (serine 441). Histidine 572 is a binding site for Zn(2+). Glutamate 575 lines the substrate pocket. Histidine 594 (proton acceptor) is an active-site residue. Aspartate 649 contributes to the Zn(2+) binding site. 650–653 (DPMQ) contributes to the substrate binding site.

This sequence belongs to the metallo-dependent hydrolases superfamily. Adenosine and AMP deaminases family. Homotetramer. It depends on Zn(2+) as a cofactor.

It carries out the reaction AMP + H2O + H(+) = IMP + NH4(+). Its pathway is purine metabolism; IMP biosynthesis via salvage pathway; IMP from AMP: step 1/1. AMP deaminase plays a critical role in energy metabolism. The polypeptide is AMP deaminase 1 (Rattus norvegicus (Rat)).